We begin with the raw amino-acid sequence, 617 residues long: Electron transfer flavoprotein-ubiquinone oxidoreductase, mitochondrial (617 aa).

A mitochondrion-targeting transit peptide spans 1 to 33 (MMVPLAKLASPAYQCFHALKIKKNYLPLCATRW). 75–80 (GAGPAG) lines the FAD pocket. Residue Lys-96 is modified to N6-acetyllysine. The stretch at 109–130 (IGAHTLSGACLDPRAFEELFPD) is an intramembrane region. N6-acetyllysine occurs at positions 132 and 223. Gly-305 and Gly-306 together coordinate a ubiquinone. An N6-acetyllysine modification is found at Lys-357. An intramembrane segment occupies 428-447 (IGLHVTEYEDNLKNSWVWKE). A Phosphoserine modification is found at Ser-551. [4Fe-4S] cluster-binding residues include Cys-561, Cys-586, Cys-589, and Cys-592. One can recognise a 4Fe-4S ferredoxin-type domain in the interval 577–606 (FRLQINAQNCVHCKTCDIKDPSQNINWVVP).

In terms of assembly, monomer. Requires [4Fe-4S] cluster as cofactor. FAD is required as a cofactor.

The protein localises to the mitochondrion inner membrane. The catalysed reaction is a ubiquinone + reduced [electron-transfer flavoprotein] = a ubiquinol + oxidized [electron-transfer flavoprotein] + H(+). Accepts electrons from ETF and reduces ubiquinone. This chain is Electron transfer flavoprotein-ubiquinone oxidoreductase, mitochondrial (ETFDH), found in Sus scrofa (Pig).